The following is a 431-amino-acid chain: Galactose-3-O-sulfotransferase 3 (431 aa).

Topologically, residues 1–19 (MPPILQRLQQATKMMSRRK) are cytoplasmic. Residues 20 to 40 (ILLLVLGCSTVSLLIHQGAQL) form a helical; Signal-anchor for type II membrane protein membrane-spanning segment. At 41–431 (SWYPKLFPLS…RVLPRGPQGP (391 aa)) the chain is on the lumenal side. N-linked (GlcNAc...) asparagine glycosylation is found at Asn-91, Asn-110, Asn-177, and Asn-302. A disordered region spans residues 399-431 (QKRRGGARARPEPVLDNPPPRPIRVLPRGPQGP).

This sequence belongs to the galactose-3-O-sulfotransferase family. Mg(2+) is required as a cofactor. In terms of tissue distribution, highly expressed in thyroid, brain, kidney, heart and spinal cord.

It localises to the golgi apparatus. Its subcellular location is the golgi stack membrane. The protein operates within protein modification; carbohydrate sulfation. Its function is as follows. Transfers a sulfate to position 3 of non-reducing beta-galactosyl residues in N-glycans and core2-branched O-glycans. Has high activity towards Gal-beta-1,4-GlcNAc, Gal-beta-1,4(Fuc-alpha-1,3)GlcNAc and lower activity towards Gal-beta-1,3(Fuc-alpha-1,4)GlcNAc. The protein is Galactose-3-O-sulfotransferase 3 (GAL3ST3) of Homo sapiens (Human).